The primary structure comprises 433 residues: Enolase (433 aa).

Glutamine 167 is a (2R)-2-phosphoglycerate binding site. The active-site Proton donor is glutamate 209. Positions 246, 291, and 318 each coordinate Mg(2+). (2R)-2-phosphoglycerate is bound by residues lysine 343, arginine 372, serine 373, and lysine 394. The active-site Proton acceptor is lysine 343.

The protein belongs to the enolase family. As to quaternary structure, component of the RNA degradosome, a multiprotein complex involved in RNA processing and mRNA degradation. The cofactor is Mg(2+).

The protein localises to the cytoplasm. The protein resides in the secreted. It localises to the cell surface. It carries out the reaction (2R)-2-phosphoglycerate = phosphoenolpyruvate + H2O. Its pathway is carbohydrate degradation; glycolysis; pyruvate from D-glyceraldehyde 3-phosphate: step 4/5. In terms of biological role, catalyzes the reversible conversion of 2-phosphoglycerate (2-PG) into phosphoenolpyruvate (PEP). It is essential for the degradation of carbohydrates via glycolysis. The chain is Enolase from Vibrio vulnificus (strain YJ016).